The chain runs to 461 residues: MLKEYRTVKEVVGPLMLVDQVDGVSFDELVEIELHNGEKRRGKVLEINKDKAMVQLFEGSAGINLKGAKVKFLGKPLELGVSEDMLGRVFDGLGNPKDGGPKIIPDKKLDINGIPINPVARNYPDEFIQTGVSAIDGLNTLVRGQKLPVFSGSGLPHAELAAQIARQAKVLNSDSKFAVVFAAIGTTFEEAQYFIDDFTKTGAIDRAVLFINLANDPAIERIATPRMALTAAEYLAFEKGMHVLVIMTDITNYCEALREVSAARKEVPGRRGYPGYLYTDLSTLYERAGRILGKEGSITQIPILTMPEDDKTHPIPDLTGYITEGQIILSRELYKKGIMPPIDVLPSLSRLKDKGIGKGKTREDHADTMNQLFSAYAQGKQAKELSVILGESALSDTDKLYAKFADAFEEEYVSQGFTTNRTIEETLNLGWKLLTILPKSELKRIRDEYLEKYLNKAEESK.

Belongs to the ATPase alpha/beta chains family.

Its function is as follows. Produces ATP from ADP in the presence of a proton gradient across the membrane. The V-type beta chain is a regulatory subunit. The sequence is that of V-type ATP synthase beta chain from Clostridium botulinum (strain ATCC 19397 / Type A).